Here is a 134-residue protein sequence, read N- to C-terminus: Cytochrome b (134 aa).

Transmembrane regions (helical) follow at residues 33 to 53 (FGSL…FLAM), 77 to 98 (WVLR…YVHV), and 113 to 133 (WNVG…GYVL). Residues His-83 and His-97 each contribute to the heme b site.

Belongs to the cytochrome b family. In terms of assembly, the cytochrome bc1 complex contains 11 subunits: 3 respiratory subunits (MT-CYB, CYC1 and UQCRFS1), 2 core proteins (UQCRC1 and UQCRC2) and 6 low-molecular weight proteins (UQCRH/QCR6, UQCRB/QCR7, UQCRQ/QCR8, UQCR10/QCR9, UQCR11/QCR10 and a cleavage product of UQCRFS1). This cytochrome bc1 complex then forms a dimer. Requires heme b as cofactor.

It localises to the mitochondrion inner membrane. Component of the ubiquinol-cytochrome c reductase complex (complex III or cytochrome b-c1 complex) that is part of the mitochondrial respiratory chain. The b-c1 complex mediates electron transfer from ubiquinol to cytochrome c. Contributes to the generation of a proton gradient across the mitochondrial membrane that is then used for ATP synthesis. The chain is Cytochrome b (MT-CYB) from Anoura caudifer (Hairy-legged long-tongued bat).